Here is a 308-residue protein sequence, read N- to C-terminus: Ribosomal RNA small subunit methyltransferase H (308 aa).

S-adenosyl-L-methionine contacts are provided by residues glycine 34–histidine 36, aspartate 54, phenylalanine 80, aspartate 101, and glutamine 108.

The protein belongs to the methyltransferase superfamily. RsmH family.

The protein resides in the cytoplasm. The catalysed reaction is cytidine(1402) in 16S rRNA + S-adenosyl-L-methionine = N(4)-methylcytidine(1402) in 16S rRNA + S-adenosyl-L-homocysteine + H(+). Functionally, specifically methylates the N4 position of cytidine in position 1402 (C1402) of 16S rRNA. This Ureaplasma urealyticum serovar 10 (strain ATCC 33699 / Western) protein is Ribosomal RNA small subunit methyltransferase H.